Reading from the N-terminus, the 435-residue chain is MADSAHVPETLAGGFFSVGLAERDPELAAAINQEATRQQHQIELIASENIVSRAVLEAQGSILTNKYAEGYPGKRYYGGCEFVDIAEELAIERAKKLFNCGFANVQPNSGSQANQGVFQAVLKPGDTILGMSLAAGGHLTHGAKPNQSGKWFNAVQYGVRPEDHLIDFDEVERLARAHRPQMIIAGGSAYPRQIDFKRFREIADDVGAIFLVDMAHFAGLVAGGAHPNPLDHCHIATTTTHKTLRGPRGGMILTNDEALAKKINSAIFPGIQGGPLMHVIAGKAVAFGEALMPEFKTYVEQVVSNARAMAAACRTAGLDVVSDGTDTHLALIDLRPKGVTGRDAEAALERAYITCNKNGIPFDPAPPTVTSGIRVGSPAGTTRGFREEEFIQIGTWIGEIVDALANGNSDAVEARVREEVKALTARFPIYEGLGG.

(6S)-5,6,7,8-tetrahydrofolate contacts are provided by residues leucine 133 and 137 to 139; that span reads GHL. Lysine 242 is modified (N6-(pyridoxal phosphate)lysine).

This sequence belongs to the SHMT family. Homodimer. Pyridoxal 5'-phosphate is required as a cofactor.

It localises to the cytoplasm. It carries out the reaction (6R)-5,10-methylene-5,6,7,8-tetrahydrofolate + glycine + H2O = (6S)-5,6,7,8-tetrahydrofolate + L-serine. The protein operates within one-carbon metabolism; tetrahydrofolate interconversion. It participates in amino-acid biosynthesis; glycine biosynthesis; glycine from L-serine: step 1/1. In terms of biological role, catalyzes the reversible interconversion of serine and glycine with tetrahydrofolate (THF) serving as the one-carbon carrier. This reaction serves as the major source of one-carbon groups required for the biosynthesis of purines, thymidylate, methionine, and other important biomolecules. Also exhibits THF-independent aldolase activity toward beta-hydroxyamino acids, producing glycine and aldehydes, via a retro-aldol mechanism. The protein is Serine hydroxymethyltransferase of Hyphomonas neptunium (strain ATCC 15444).